Here is an 89-residue protein sequence, read N- to C-terminus: Putative regulatory protein CYA_2696 (89 aa).

It belongs to the RemA family.

This chain is Putative regulatory protein CYA_2696, found in Synechococcus sp. (strain JA-3-3Ab) (Cyanobacteria bacterium Yellowstone A-Prime).